A 177-amino-acid chain; its full sequence is MLDAFSRVVVNSDAKAAYVGGSDLQALKSFIADGNKRLDSVNAIVSNASCMVSDAVSGMICENPGLISPGGNCYTNRRMAACLRDGEIILRYVSYALLAGDASVLEDRCLNGLKETYIALGVPTNSSIRAVSIMKAQAVAFITNTATERKMSFAAGDCTSLASEVASYFDRVGAAIS.

Positions 50 and 61 each coordinate phycourobilin. At Asn-72 the chain carries N4-methylasparagine. The (2R,3E)-phycoerythrobilin site is built by Cys-82 and Cys-158.

This sequence belongs to the phycobiliprotein family. As to quaternary structure, heteromer of 6 alpha, 6 beta and one gamma chain. Post-translationally, contains two covalently linked phycoerythrobilin chromophores and one covalently linked phycourobilin chromophore.

It is found in the plastid. The protein localises to the chloroplast thylakoid membrane. Its function is as follows. Light-harvesting photosynthetic bile pigment-protein from the phycobiliprotein complex. The chain is B-phycoerythrin beta chain (cpeB) from Porphyridium sordidum (Red alga).